Consider the following 485-residue polypeptide: Bifunctional protein GlmU (485 aa).

Positions 1 to 241 are pyrophosphorylase; that stretch reads MSASDFSSAV…ARELAGVNDR (241 aa). UDP-N-acetyl-alpha-D-glucosamine-binding positions include 13–16, Lys27, Gln84, and 89–90; these read LAAG and GT. Position 114 (Asp114) interacts with Mg(2+). Residues Gly151, Glu166, Asn181, and Asn239 each contribute to the UDP-N-acetyl-alpha-D-glucosamine site. Asn239 serves as a coordination point for Mg(2+). A linker region spans residues 242–262; that stretch reads VQLAEAGAELNRRTVIAAMRG. An N-acetyltransferase region spans residues 263–485; it reads GATIVDPATT…AAQNVHNQEG (223 aa). The UDP-N-acetyl-alpha-D-glucosamine site is built by Arg344 and Lys362. Catalysis depends on His374, which acts as the Proton acceptor. 2 residues coordinate UDP-N-acetyl-alpha-D-glucosamine: Tyr377 and Asn388. Acetyl-CoA contacts are provided by residues Ala391, 397-398, Ser416, and Ala434; that span reads NY. The interval 465-485 is disordered; the sequence is RPGTAAAQAAEAAQNVHNQEG. Low complexity predominate over residues 469–478; it reads AAAQAAEAAQ.

This sequence in the N-terminal section; belongs to the N-acetylglucosamine-1-phosphate uridyltransferase family. It in the C-terminal section; belongs to the transferase hexapeptide repeat family. Homotrimer. It depends on Mg(2+) as a cofactor.

The protein resides in the cytoplasm. It catalyses the reaction alpha-D-glucosamine 1-phosphate + acetyl-CoA = N-acetyl-alpha-D-glucosamine 1-phosphate + CoA + H(+). The enzyme catalyses N-acetyl-alpha-D-glucosamine 1-phosphate + UTP + H(+) = UDP-N-acetyl-alpha-D-glucosamine + diphosphate. It participates in nucleotide-sugar biosynthesis; UDP-N-acetyl-alpha-D-glucosamine biosynthesis; N-acetyl-alpha-D-glucosamine 1-phosphate from alpha-D-glucosamine 6-phosphate (route II): step 2/2. The protein operates within nucleotide-sugar biosynthesis; UDP-N-acetyl-alpha-D-glucosamine biosynthesis; UDP-N-acetyl-alpha-D-glucosamine from N-acetyl-alpha-D-glucosamine 1-phosphate: step 1/1. Its pathway is bacterial outer membrane biogenesis; LPS lipid A biosynthesis. Catalyzes the last two sequential reactions in the de novo biosynthetic pathway for UDP-N-acetylglucosamine (UDP-GlcNAc). The C-terminal domain catalyzes the transfer of acetyl group from acetyl coenzyme A to glucosamine-1-phosphate (GlcN-1-P) to produce N-acetylglucosamine-1-phosphate (GlcNAc-1-P), which is converted into UDP-GlcNAc by the transfer of uridine 5-monophosphate (from uridine 5-triphosphate), a reaction catalyzed by the N-terminal domain. This chain is Bifunctional protein GlmU, found in Corynebacterium glutamicum (strain ATCC 13032 / DSM 20300 / JCM 1318 / BCRC 11384 / CCUG 27702 / LMG 3730 / NBRC 12168 / NCIMB 10025 / NRRL B-2784 / 534).